The sequence spans 44 residues: Cytochrome b559 subunit beta (44 aa).

A helical transmembrane segment spans residues 19–35; that stretch reads WIAVHTLAVPSVFFLGA. Residue H23 participates in heme binding.

It belongs to the PsbE/PsbF family. As to quaternary structure, heterodimer of an alpha subunit and a beta subunit. PSII is composed of 1 copy each of membrane proteins PsbA, PsbB, PsbC, PsbD, PsbE, PsbF, PsbH, PsbI, PsbJ, PsbK, PsbL, PsbM, PsbT, PsbX, PsbY, PsbZ, Psb30/Ycf12, peripheral proteins PsbO, CyanoQ (PsbQ), PsbU, PsbV and a large number of cofactors. It forms dimeric complexes. The cofactor is heme b.

The protein resides in the cellular thylakoid membrane. In terms of biological role, this b-type cytochrome is tightly associated with the reaction center of photosystem II (PSII). PSII is a light-driven water:plastoquinone oxidoreductase that uses light energy to abstract electrons from H(2)O, generating O(2) and a proton gradient subsequently used for ATP formation. It consists of a core antenna complex that captures photons, and an electron transfer chain that converts photonic excitation into a charge separation. The polypeptide is Cytochrome b559 subunit beta (Cyanothece sp. (strain PCC 7425 / ATCC 29141)).